Consider the following 975-residue polypeptide: FHF complex subunit HOOK-interacting protein 1B (975 aa).

The interval A465–P496 is disordered. At S467 the chain carries Phosphoserine. Over residues S482–P496 the composition is skewed to low complexity. Residues S510, S523, S529, and S533 each carry the phosphoserine modification. 3 disordered regions span residues L511–E548, S573–V621, and S690–C717. Residues T527–P538 show a composition bias toward low complexity. A compositionally biased stretch (basic and acidic residues) spans L597–E608. S863 is modified (phosphoserine). T892 carries the phosphothreonine modification. Residue S900 is modified to Phosphoserine.

It belongs to the FHIP family. As to quaternary structure, component of the FTS/Hook/FHIP complex (FHF complex), composed of AKTIP/FTS, FHIP1B, and one or more members of the Hook family of proteins HOOK1, HOOK2, and HOOK3. The FHF complex associates with the homotypic vesicular sorting complex (the HOPS complex).

In terms of biological role, component of the FTS/Hook/FHIP complex (FHF complex). The FHF complex may function to promote vesicle trafficking and/or fusion via the homotypic vesicular protein sorting complex (the HOPS complex). FHF complex promotes the distribution of AP-4 complex to the perinuclear area of the cell. The protein is FHF complex subunit HOOK-interacting protein 1B of Mus musculus (Mouse).